The sequence spans 583 residues: CTP synthase (583 aa).

Residues 1 to 278 form an amidoligase domain region; that stretch reads MRRHPQTATK…DAFVVRRLNL (278 aa). CTP is bound at residue Ser20. Ser20 is a binding site for UTP. Residues 21 to 26 and Asp78 contribute to the ATP site; that span reads SLGKGL. 2 residues coordinate Mg(2+): Asp78 and Glu152. CTP contacts are provided by residues 159–161, 199–204, and Lys235; these read DIE and KTKPTQ. UTP-binding positions include 199-204 and Lys235; that span reads KTKPTQ. A Glutamine amidotransferase type-1 domain is found at 303–551; sequence RIALVGKYVE…VKAAIDYKEG (249 aa). Gly366 is a binding site for L-glutamine. Cys393 (nucleophile; for glutamine hydrolysis) is an active-site residue. Residues 394 to 397, Glu416, and Arg477 contribute to the L-glutamine site; that span reads LGLQ. Residues His524 and Glu526 contribute to the active site. Positions 559–583 are disordered; sequence PERVSNGAERRDQVGQSIPEPANRG.

It belongs to the CTP synthase family. In terms of assembly, homotetramer.

The catalysed reaction is UTP + L-glutamine + ATP + H2O = CTP + L-glutamate + ADP + phosphate + 2 H(+). It carries out the reaction L-glutamine + H2O = L-glutamate + NH4(+). The enzyme catalyses UTP + NH4(+) + ATP = CTP + ADP + phosphate + 2 H(+). Its pathway is pyrimidine metabolism; CTP biosynthesis via de novo pathway; CTP from UDP: step 2/2. Its activity is regulated as follows. Allosterically activated by GTP, when glutamine is the substrate; GTP has no effect on the reaction when ammonia is the substrate. The allosteric effector GTP functions by stabilizing the protein conformation that binds the tetrahedral intermediate(s) formed during glutamine hydrolysis. Inhibited by the product CTP, via allosteric rather than competitive inhibition. Functionally, catalyzes the ATP-dependent amination of UTP to CTP with either L-glutamine or ammonia as the source of nitrogen. Regulates intracellular CTP levels through interactions with the four ribonucleotide triphosphates. The polypeptide is CTP synthase (Mycobacterium marinum (strain ATCC BAA-535 / M)).